A 173-amino-acid polypeptide reads, in one-letter code: Small ribosomal subunit protein uS5 (173 aa).

Residues 17-80 (WQERVIQIRR…ADGKKQLIEV (64 aa)) form the S5 DRBM domain.

It belongs to the universal ribosomal protein uS5 family. In terms of assembly, part of the 30S ribosomal subunit. Contacts proteins S4 and S8.

Functionally, with S4 and S12 plays an important role in translational accuracy. Located at the back of the 30S subunit body where it stabilizes the conformation of the head with respect to the body. The sequence is that of Small ribosomal subunit protein uS5 from Synechocystis sp. (strain ATCC 27184 / PCC 6803 / Kazusa).